Here is a 569-residue protein sequence, read N- to C-terminus: Apical membrane antigen 1 (569 aa).

Residues 1–48 (MICSIMGGLRSLRAARPYSHQSNTETKHMGLVGVASLLVLVADCTIFA) form the signal peptide. The propeptide at 49–66 (SGLSSSTRSRESQTLSAS) is removed in mature form; required for microneme targeting of the proprotein. The Extracellular segment spans residues 49–483 (SGLSSSTRSR…DEQNECGSNT (435 aa)). The DI stretch occupies residues 67-287 (TSGNPFQANV…NPDAFISKCP (221 aa)). Asn86 is a glycosylation site (N-linked (GlcNAc...) asparagine). 8 cysteine pairs are disulfide-bonded: Cys117/Cys286, Cys194/Cys226, Cys242/Cys255, Cys304/Cys393, Cys324/Cys384, Cys435/Cys459, Cys447/Cys471, and Cys452/Cys479. Residues 288–415 (NQALRGYRFG…AGSLSEETPN (128 aa)) are DII. The segment at 416–487 (FIIPSNPSVT…ECGSNTALIA (72 aa)) is DIII. The chain crosses the membrane as a helical span at residues 484–504 (ALIAGLAVGGVLLLALLGGGC). The Cytoplasmic segment spans residues 505-569 (YFAKRLDRNK…ETHVMVEGDY (65 aa)). The span at 518 to 530 (AAHHEHEFQSDRG) shows a compositional bias: basic and acidic residues. The disordered stretch occupies residues 518 to 548 (AAHHEHEFQSDRGARKKRPSDLMQEAEPSFW).

This sequence belongs to the apicomplexan parasites AMA1 family. In terms of assembly, component of the moving junction (MJ) complex, composed of AMA1, a transmembrane protein on the parasite surface, and a complex of the rhoptry neck proteins RON2, RON4, RON5 and RON8 localized to the cytoplasmic face of the host plasma membrane. Interacts (via ectodomain) with RON2 (via C-terminus); RON2 serves as the receptor for AMA1 on the host plasma membrane. AMA1 and the RON proteins are initially in distinct compartments within the parasite, namely the micronemes and the rhoptries, and interaction happens only upon initiation of invasion when the micronemes and rhoptries discharge. In terms of processing, proteolytically cleaved during invasion within its transmembrane domain, releasing a soluble form from the tachyzoite surface. The cytosolic tail generated by ROM4 cleavage during invasion may trigger parasite replication within the parasitophorous vacuole.

It is found in the cell membrane. Its subcellular location is the secreted. In terms of biological role, essential microneme protein that plays an important role in host cell invasion. Part of the moving junction (MJ) complex, a ringlike structure formed between the plasma membranes of the apical tip of the parasite and the target host cell. During invasion, the MJ migrates from the anterior to the posterior of the parasite, leading to internalization of the parasite into a parasitophorous vacuole (PV). The polypeptide is Apical membrane antigen 1 (AMA1) (Toxoplasma gondii (strain ATCC 50861 / VEG)).